The primary structure comprises 354 residues: Inactive ADP-ribosyltransferase arh2 (354 aa).

This sequence belongs to the ADP-ribosylglycohydrolase family. As to expression, expressed in heart (at protein level). A short form is detected in both heart and tadpole tail (at protein level).

It localises to the cytoplasm. It is found in the myofibril. Its subcellular location is the sarcomere. Required for myofibril assembly and outgrowth of the cardiac chambers in the developing heart. Appears to be catalytically inactive, showing no activity against O-acetyl-ADP-ribose. In Xenopus laevis (African clawed frog), this protein is Inactive ADP-ribosyltransferase arh2 (adprhl1).